The chain runs to 320 residues: Malate dehydrogenase (320 aa).

Residues 10–15 and D34 contribute to the NAD(+) site; that span reads GAGQIG. Substrate is bound by residues R83 and R89. NAD(+) is bound by residues N96 and 119–121; that span reads ITN. N121 and R152 together coordinate substrate. H176 serves as the catalytic Proton acceptor.

It belongs to the LDH/MDH superfamily. MDH type 3 family.

The enzyme catalyses (S)-malate + NAD(+) = oxaloacetate + NADH + H(+). Its function is as follows. Catalyzes the reversible oxidation of malate to oxaloacetate. The sequence is that of Malate dehydrogenase from Methylobacterium sp. (strain 4-46).